A 576-amino-acid polypeptide reads, in one-letter code: 4-alpha-glucanotransferase, chloroplastic/amyloplastic (576 aa).

A chloroplast-targeting transit peptide spans 1–52 (MAIHTCFSLIPSSFSSPKLPYPKNTTFQSPIPKLSRPTFMFDRKGSFQNGTA).

The protein belongs to the disproportionating enzyme family. Present in leaves, stems, roots, and stolons but is most abundant in developing and mature tubers.

Its subcellular location is the plastid. It is found in the chloroplast. It localises to the amyloplast. It carries out the reaction Transfers a segment of a (1-&gt;4)-alpha-D-glucan to a new position in an acceptor, which may be glucose or a (1-&gt;4)-alpha-D-glucan.. In terms of biological role, may act during starch breakdown to convert small oligosaccharides into larger molecules upon which starch phosphorylase can act, or may change the structure of starch molecules and grain architecture by modifying chain length, or may generate from starch and glucose oligosaccharides which can serve either as primers for new starch phosphoenzyme. The polypeptide is 4-alpha-glucanotransferase, chloroplastic/amyloplastic (DPEP) (Solanum tuberosum (Potato)).